The chain runs to 231 residues: ATP phosphoribosyltransferase (231 aa).

The protein belongs to the ATP phosphoribosyltransferase family. Short subfamily. As to quaternary structure, heteromultimer composed of HisG and HisZ subunits.

Its subcellular location is the cytoplasm. It carries out the reaction 1-(5-phospho-beta-D-ribosyl)-ATP + diphosphate = 5-phospho-alpha-D-ribose 1-diphosphate + ATP. The protein operates within amino-acid biosynthesis; L-histidine biosynthesis; L-histidine from 5-phospho-alpha-D-ribose 1-diphosphate: step 1/9. Catalyzes the condensation of ATP and 5-phosphoribose 1-diphosphate to form N'-(5'-phosphoribosyl)-ATP (PR-ATP). Has a crucial role in the pathway because the rate of histidine biosynthesis seems to be controlled primarily by regulation of HisG enzymatic activity. The chain is ATP phosphoribosyltransferase (hisG) from Rhizobium etli (strain ATCC 51251 / DSM 11541 / JCM 21823 / NBRC 15573 / CFN 42).